A 461-amino-acid chain; its full sequence is MNERIRIREILAGTPAGTEVIVKGWVRTSRVGKGVAFLAVNDGSCLASLQVVAEPGLANYHELRGIGTGAAVAVRGIVAESPAAGQAVELHATKVVVVGGADEQYPLQKKRHTFEYLRTIAHLRPRSNTFGAVFRVRSSLAQAVHRFFAERGFLYVHTPIITTSDCEGAGELFRVTTLDPSAPPMADGAVDFSQDFFAAQAGLTVSGQLEGELFAQAFSDIYTFGPTFRAENSNTPRHAAEFWMIEPEMAFADLRDDAALAEDFFRYLCRHVLDNCAEDMAFFNEHVDRGLLARVEQVAGSSFAMMEYGVAIEHLKRAAVPFEYPVEWGLDLQTEHERYLTEQVVGGPVFVVNYPQEIKAFYMRRNDDGRTVAAMDLLVPKVGEIIGGSQREERYDLLESRMREGGIAPESLWWYLDSRRWGSTPHAGFGLGFERLIMYLTGMENIRDVIPFPRTPRHAEF.

It belongs to the class-II aminoacyl-tRNA synthetase family. Homodimer.

The protein localises to the cytoplasm. It carries out the reaction tRNA(Asn) + L-asparagine + ATP = L-asparaginyl-tRNA(Asn) + AMP + diphosphate + H(+). The chain is Asparagine--tRNA ligase from Geobacter sulfurreducens (strain ATCC 51573 / DSM 12127 / PCA).